The sequence spans 650 residues: Kinesin-like protein KIF22-B (650 aa).

The 329-residue stretch at Arg31 to Ile359 folds into the Kinesin motor domain. Gly116–Thr123 serves as a coordination point for ATP. A disordered region spans residues Ser365–Lys416. The segment covering Thr401–Ser411 has biased composition (low complexity). Positions Lys452–Leu498 form a coiled coil. The short motif at Gly560–Asn563 is the Important for regulated proteolytic degradation element.

Belongs to the TRAFAC class myosin-kinesin ATPase superfamily. Kinesin family. Ubiquitinated, leading to its subsequent proteasomal degradation.

Its subcellular location is the nucleus. It is found in the cytoplasm. The protein localises to the cytoskeleton. In terms of biological role, kinesin family member that is involved in spindle formation and the movements of chromosomes during mitosis and meiosis. Binds to microtubules and to DNA. This Xenopus laevis (African clawed frog) protein is Kinesin-like protein KIF22-B (kif22-b).